A 236-amino-acid chain; its full sequence is Transcription repressor MYB6 (236 aa).

2 consecutive HTH myb-type domains span residues 9–61 (KAHT…INYL) and 62–116 (RPDL…KRKL). 2 consecutive DNA-binding regions (H-T-H motif) follow at residues 37–61 (WRSLPKSAGLLRCGKSCRLRWINYL) and 89–112 (WSLIAGRLPGRTDNEIKNYWNTHI). Positions 159–181 (PKTENSSDNGASTSGTTTDEDLR) are disordered. Residues 162-175 (ENSSDNGASTSGTT) show a composition bias toward polar residues.

In terms of assembly, interacts with BHLH012/MYC1 and BHLH042/TT8. Expressed in roots, stems, flower buds, and siliques.

Its subcellular location is the nucleus. This Arabidopsis thaliana (Mouse-ear cress) protein is Transcription repressor MYB6 (MYB6).